The chain runs to 75 residues: Large ribosomal subunit protein bL31 (75 aa).

The protein belongs to the bacterial ribosomal protein bL31 family. Type A subfamily. Part of the 50S ribosomal subunit.

In terms of biological role, binds the 23S rRNA. In Rhodopseudomonas palustris (strain BisB18), this protein is Large ribosomal subunit protein bL31.